The sequence spans 185 residues: MKMFESADSTATRSGQDLWAEICSCLPNPEQEDGANNAFSDSFVDSCPEGEGQREVADFAVQPAVKPWAPLQDSEVYLASLEKKLRRIKGLNQEVTSKDMLRTLAQAKKECWDRFLQEKLASEFFVDGLDSDESTLEHFKRWLQPDKVAVSTEEVQYLIPPESQVEKPVAEDEPAAGDKPAAAEQ.

Positions 78 to 98 (LASLEKKLRRIKGLNQEVTSK) form a coiled coil. Residues 159 to 185 (IPPESQVEKPVAEDEPAAGDKPAAAEQ) are disordered.

Interacts with AP2S1; the interaction is direct and mediates association with adaptor protein complex 2 (AP-2).

It localises to the membrane. The protein localises to the coated pit. In terms of biological role, regulates clathrin-mediated endocytsois of cargos such as transferrin probably through the association and modulation of adaptor protein complex 2 (AP-2). Has a role in ciliogenesis. Required for proper cephalic and left/right axis development. This is Coiled-coil domain-containing protein 32 from Homo sapiens (Human).